A 234-amino-acid polypeptide reads, in one-letter code: Sugar fermentation stimulation protein A (234 aa).

The H-T-H motif DNA-binding region spans 201–220 (LLTEAQQRGVEILAYKAEIS).

It belongs to the SfsA family.

Functionally, binds to DNA non-specifically. Could be a regulatory factor involved in maltose metabolism. The protein is Sugar fermentation stimulation protein A of Escherichia fergusonii (strain ATCC 35469 / DSM 13698 / CCUG 18766 / IAM 14443 / JCM 21226 / LMG 7866 / NBRC 102419 / NCTC 12128 / CDC 0568-73).